The primary structure comprises 688 residues: Zinc finger protein 770 (688 aa).

Residue Lys11 forms a Glycyl lysine isopeptide (Lys-Gly) (interchain with G-Cter in SUMO2) linkage. 3 consecutive C2H2-type zinc fingers follow at residues 27-49, 55-77, and 81-103; these read YVCNICFKHFETPSKLARHYLIH, FECDVCHKTFRQLVHLERHQLTH, and FKCSICQRHFKNLKTFVKHQQLH. Glycyl lysine isopeptide (Lys-Gly) (interchain with G-Cter in SUMO2) cross-links involve residues Lys112, Lys121, and Lys146. 3 consecutive C2H2-type zinc fingers follow at residues 160 to 182, 188 to 210, and 216 to 238; these read HACTICGKMFPSQSKLDRHVLIH, FKCVLCTKSFRQSTHLKIHQLTH, and FQCCFCQKGFKIQSKLLKHKQIH. Residue Lys262 forms a Glycyl lysine isopeptide (Lys-Gly) (interchain with G-Cter in SUMO2) linkage. A C2H2-type 7; degenerate zinc finger spans residues 294–318; sequence FQCPKCEKCFESEQILNEHSCFPAR. Glycyl lysine isopeptide (Lys-Gly) (interchain with G-Cter in SUMO2) cross-links involve residues Lys420 and Lys437. C2H2-type zinc fingers lie at residues 475-497, 503-525, 623-645, and 651-673; these read CPCDKCEKVFPSISKLKRHYLIH, FGCNICGKSFRQSAHLKRHEQTH, YRCSVCAKSFRSPSKLERHYLIH, and FECSVCGKTFRQAPHWKRHQLTH. Residue Lys681 forms a Glycyl lysine isopeptide (Lys-Gly) (interchain with G-Cter in SUMO2) linkage.

This sequence belongs to the krueppel C2H2-type zinc-finger protein family.

It is found in the nucleus. May be involved in transcriptional regulation. The chain is Zinc finger protein 770 (ZNF770) from Pongo abelii (Sumatran orangutan).